A 316-amino-acid chain; its full sequence is Beta-ketoacyl-[acyl-carrier-protein] synthase III (316 aa).

Residues Cys-112 and His-243 contribute to the active site. The tract at residues 244-248 is ACP-binding; it reads QANLR. Asn-273 is an active-site residue.

This sequence belongs to the thiolase-like superfamily. FabH family. In terms of assembly, homodimer.

It is found in the cytoplasm. It catalyses the reaction malonyl-[ACP] + acetyl-CoA + H(+) = 3-oxobutanoyl-[ACP] + CO2 + CoA. It functions in the pathway lipid metabolism; fatty acid biosynthesis. In terms of biological role, catalyzes the condensation reaction of fatty acid synthesis by the addition to an acyl acceptor of two carbons from malonyl-ACP. Catalyzes the first condensation reaction which initiates fatty acid synthesis and may therefore play a role in governing the total rate of fatty acid production. Possesses both acetoacetyl-ACP synthase and acetyl transacylase activities. Its substrate specificity determines the biosynthesis of branched-chain and/or straight-chain of fatty acids. This chain is Beta-ketoacyl-[acyl-carrier-protein] synthase III, found in Histophilus somni (strain 129Pt) (Haemophilus somnus).